The primary structure comprises 385 residues: Transcription termination factor 2, mitochondrial (385 aa).

The N-terminal 35 residues, 1 to 35 (MSWRLLTGYQLCRLRLFRKPQPALKIRPSSVCVTY), are a transit peptide targeting the mitochondrion.

Belongs to the mTERF family. As to quaternary structure, monomer.

It is found in the mitochondrion matrix. The protein localises to the mitochondrion nucleoid. Functionally, binds mitochondrial DNA and plays a role in the regulation of transcription of mitochondrial mRNA and rRNA species. This chain is Transcription termination factor 2, mitochondrial (Mterf2), found in Rattus norvegicus (Rat).